A 236-amino-acid polypeptide reads, in one-letter code: Small ribosomal subunit protein eS6 (236 aa).

Belongs to the eukaryotic ribosomal protein eS6 family. Component of the small ribosomal subunit. Mature ribosomes consist of a small (40S) and a large (60S) subunit. The 40S subunit contains about 32 different proteins and 1 molecule of RNA (18S). The 60S subunit contains 45 different proteins and 3 molecules of RNA (25S, 5.8S and 5S).

It is found in the cytoplasm. Component of the ribosome, a large ribonucleoprotein complex responsible for the synthesis of proteins in the cell. The small ribosomal subunit (SSU) binds messenger RNAs (mRNAs) and translates the encoded message by selecting cognate aminoacyl-transfer RNA (tRNA) molecules. The large subunit (LSU) contains the ribosomal catalytic site termed the peptidyl transferase center (PTC), which catalyzes the formation of peptide bonds, thereby polymerizing the amino acids delivered by tRNAs into a polypeptide chain. The nascent polypeptides leave the ribosome through a tunnel in the LSU and interact with protein factors that function in enzymatic processing, targeting, and the membrane insertion of nascent chains at the exit of the ribosomal tunnel. RPS6A is involved in nucleolar processing of pre-18S ribosomal RNA and ribosome assembly. This Candida albicans (strain SC5314 / ATCC MYA-2876) (Yeast) protein is Small ribosomal subunit protein eS6 (RPS6A).